The primary structure comprises 509 residues: Glycogen synthase (509 aa).

K47 contacts ADP-alpha-D-glucose.

Belongs to the glycosyltransferase 1 family. Bacterial/plant glycogen synthase subfamily.

The enzyme catalyses [(1-&gt;4)-alpha-D-glucosyl](n) + ADP-alpha-D-glucose = [(1-&gt;4)-alpha-D-glucosyl](n+1) + ADP + H(+). It participates in glycan biosynthesis; glycogen biosynthesis. Synthesizes alpha-1,4-glucan chains using ADP-glucose. The chain is Glycogen synthase from Xanthomonas euvesicatoria pv. vesicatoria (strain 85-10) (Xanthomonas campestris pv. vesicatoria).